A 776-amino-acid chain; its full sequence is Mitochondrial intermediate peptidase (776 aa).

A mitochondrion-targeting transit peptide spans 1–38; it reads MLNSARTVLARHSARQLYRFRGCLVHQQRHRHQVQRTL. Zn(2+) is bound at residue H560. The active site involves E561. Residues H564 and H567 each contribute to the Zn(2+) site.

It belongs to the peptidase M3 family. Requires Zn(2+) as cofactor.

Its subcellular location is the mitochondrion matrix. It catalyses the reaction Release of an N-terminal octapeptide as second stage of processing of some proteins imported into the mitochondrion.. Its function is as follows. Cleaves proteins, imported into the mitochondrion, to their mature size. While most mitochondrial precursor proteins are processed to the mature form in one step by mitochondrial processing peptidase (MPP), the sequential cleavage by MIP of an octapeptide after initial processing by MPP is a required step for a subgroup of nuclear-encoded precursor proteins destined for the matrix or the inner membrane. The protein is Mitochondrial intermediate peptidase (OCT1) of Coprinopsis cinerea (strain Okayama-7 / 130 / ATCC MYA-4618 / FGSC 9003) (Inky cap fungus).